Here is a 141-residue protein sequence, read N- to C-terminus: Protein stum homolog (141 aa).

A Phosphoserine modification is found at serine 26. The next 2 membrane-spanning stretches (helical) occupy residues 51–71 (FPVAVICLFLNTFVPGLGTFV) and 87–107 (RHVCCVFWLNIAAALIQILTA).

The protein belongs to the SPEC3 family. Stum subfamily.

The protein resides in the membrane. This chain is Protein stum homolog, found in Homo sapiens (Human).